The sequence spans 379 residues: Cytochrome b (379 aa).

Helical transmembrane passes span 34 to 54, 78 to 99, 114 to 134, and 179 to 199; these read FGSLLGICLITQILTGLLLAT, WLIRNLHANGASFFFICIYLHI, WNIGIILLLTLMATAFVGYVL, and FFALHFLLPFLIVSLSIIHLT. Residues His-84 and His-98 each contribute to the heme b site. Residues His-183 and His-197 each contribute to the heme b site. His-202 is a binding site for a ubiquinone. The next 4 helical transmembrane spans lie at 227 to 247, 289 to 309, 321 to 341, and 348 to 368; these read TKDMLGFTLMFFPLLTLAFFF, LGGVLALTASVLILFLSPLLH, MSQLLFWLLIANLLILTWIGS, and FIIIGQVASFTYFFTLLFLFP.

The protein belongs to the cytochrome b family. In terms of assembly, the cytochrome bc1 complex contains 11 subunits: 3 respiratory subunits (MT-CYB, CYC1 and UQCRFS1), 2 core proteins (UQCRC1 and UQCRC2) and 6 low-molecular weight proteins (UQCRH/QCR6, UQCRB/QCR7, UQCRQ/QCR8, UQCR10/QCR9, UQCR11/QCR10 and a cleavage product of UQCRFS1). This cytochrome bc1 complex then forms a dimer. Requires heme b as cofactor.

The protein resides in the mitochondrion inner membrane. In terms of biological role, component of the ubiquinol-cytochrome c reductase complex (complex III or cytochrome b-c1 complex) that is part of the mitochondrial respiratory chain. The b-c1 complex mediates electron transfer from ubiquinol to cytochrome c. Contributes to the generation of a proton gradient across the mitochondrial membrane that is then used for ATP synthesis. This Tinamus major (Great tinamou) protein is Cytochrome b (MT-CYB).